The sequence spans 289 residues: Diaminopimelate epimerase (289 aa).

Substrate contacts are provided by Asn-11 and Asn-78. The Proton donor role is filled by Cys-87. Substrate contacts are provided by residues 88-89 (GN), Asn-163, Asn-199, and 217-218 (ER). The Proton acceptor role is filled by Cys-226. 227-228 (GT) provides a ligand contact to substrate.

Belongs to the diaminopimelate epimerase family. In terms of assembly, homodimer.

The protein resides in the cytoplasm. It catalyses the reaction (2S,6S)-2,6-diaminopimelate = meso-2,6-diaminopimelate. It participates in amino-acid biosynthesis; L-lysine biosynthesis via DAP pathway; DL-2,6-diaminopimelate from LL-2,6-diaminopimelate: step 1/1. Catalyzes the stereoinversion of LL-2,6-diaminopimelate (L,L-DAP) to meso-diaminopimelate (meso-DAP), a precursor of L-lysine and an essential component of the bacterial peptidoglycan. This Rhodococcus opacus (strain B4) protein is Diaminopimelate epimerase.